Here is a 638-residue protein sequence, read N- to C-terminus: Mediator of RNA polymerase II transcription subunit 17 (638 aa).

The segment at 1–21 (MSDSFNLPLRPLTEKRERPDP) is disordered.

The protein belongs to the Mediator complex subunit 17 family. As to quaternary structure, component of the Mediator complex.

The protein localises to the nucleus. Its function is as follows. Component of the Mediator complex, a coactivator involved in the regulated transcription of nearly all RNA polymerase II-dependent genes. Mediator functions as a bridge to convey information from gene-specific regulatory proteins to the basal RNA polymerase II transcription machinery. Mediator is recruited to promoters by direct interactions with regulatory proteins and serves as a scaffold for the assembly of a functional preinitiation complex with RNA polymerase II and the general transcription factors. The protein is Mediator of RNA polymerase II transcription subunit 17 (srb4) of Aspergillus oryzae (strain ATCC 42149 / RIB 40) (Yellow koji mold).